We begin with the raw amino-acid sequence, 393 residues long: NAD(P)H-quinone oxidoreductase subunit H, chloroplastic (393 aa).

The protein belongs to the complex I 49 kDa subunit family. In terms of assembly, NDH is composed of at least 16 different subunits, 5 of which are encoded in the nucleus.

The protein resides in the plastid. Its subcellular location is the chloroplast thylakoid membrane. It carries out the reaction a plastoquinone + NADH + (n+1) H(+)(in) = a plastoquinol + NAD(+) + n H(+)(out). The enzyme catalyses a plastoquinone + NADPH + (n+1) H(+)(in) = a plastoquinol + NADP(+) + n H(+)(out). Functionally, NDH shuttles electrons from NAD(P)H:plastoquinone, via FMN and iron-sulfur (Fe-S) centers, to quinones in the photosynthetic chain and possibly in a chloroplast respiratory chain. The immediate electron acceptor for the enzyme in this species is believed to be plastoquinone. Couples the redox reaction to proton translocation, and thus conserves the redox energy in a proton gradient. The sequence is that of NAD(P)H-quinone oxidoreductase subunit H, chloroplastic from Solanum tuberosum (Potato).